A 346-amino-acid polypeptide reads, in one-letter code: Uroporphyrinogen decarboxylase (346 aa).

Substrate-binding positions include 21–25, Asp71, Tyr146, Ser201, and His316; that span reads RQAGR.

This sequence belongs to the uroporphyrinogen decarboxylase family. In terms of assembly, homodimer.

It localises to the cytoplasm. The catalysed reaction is uroporphyrinogen III + 4 H(+) = coproporphyrinogen III + 4 CO2. It functions in the pathway porphyrin-containing compound metabolism; protoporphyrin-IX biosynthesis; coproporphyrinogen-III from 5-aminolevulinate: step 4/4. Functionally, catalyzes the decarboxylation of four acetate groups of uroporphyrinogen-III to yield coproporphyrinogen-III. This chain is Uroporphyrinogen decarboxylase, found in Rickettsia massiliae (strain Mtu5).